Reading from the N-terminus, the 102-residue chain is Vacuolar ATPase assembly integral membrane protein VMA21 (102 aa).

Residues 1–30 (MERYDKATLNAAFAPEFRQNEGSLTSTLRT) are Cytoplasmic-facing. Residues 31–51 (LLFFTALMITLPVGLYFSSKA) traverse the membrane as a helical segment. Residues 52–66 (YIFEGTLGMSNRDSY) lie on the Lumenal side of the membrane. Residues 67 to 87 (FYAAIVAVVTVHVVLAMFVYV) traverse the membrane as a helical segment. Residues 88-102 (AWSEGTRQWREGKQD) lie on the Cytoplasmic side of the membrane.

It belongs to the VMA21 family. In terms of assembly, associates with the V0 complex of the vacuolar ATPase (V-ATPase). Interacts with ATP6AP2.

It is found in the endoplasmic reticulum membrane. The protein resides in the endoplasmic reticulum-Golgi intermediate compartment membrane. The protein localises to the cytoplasmic vesicle. Its subcellular location is the COPII-coated vesicle membrane. Its function is as follows. Required for the assembly of the V0 complex of the vacuolar ATPase (V-ATPase) in the endoplasmic reticulum. The chain is Vacuolar ATPase assembly integral membrane protein VMA21 from Gallus gallus (Chicken).